The following is a 91-amino-acid chain: Apolipoprotein C-III (91 aa).

An N-terminal signal peptide occupies residues 1 to 20 (MQPRVLLAVTLLALLVSARA). M63 is subject to Methionine sulfoxide. Positions 68–91 (DSMKGYWTSLIGRLSGFLDSTPSS) are lipid-binding.

This sequence belongs to the apolipoprotein C3 family.

It localises to the secreted. Its function is as follows. Component of triglyceride-rich very low density lipoproteins (VLDL) and high density lipoproteins (HDL) in plasma. Plays a multifaceted role in triglyceride homeostasis. Intracellularly, promotes hepatic very low density lipoprotein 1 (VLDL1) assembly and secretion; extracellularly, attenuates hydrolysis and clearance of triglyceride-rich lipoproteins (TRLs). Impairs the lipolysis of TRLs by inhibiting lipoprotein lipase and the hepatic uptake of TRLs by remnant receptors. Formed of several curved helices connected via semiflexible hinges, so that it can wrap tightly around the curved micelle surface and easily adapt to the different diameters of its natural binding partners. This Cavia porcellus (Guinea pig) protein is Apolipoprotein C-III (APOC3).